Reading from the N-terminus, the 446-residue chain is Exodeoxyribonuclease 7 large subunit (446 aa).

The protein belongs to the XseA family. As to quaternary structure, heterooligomer composed of large and small subunits.

It localises to the cytoplasm. It carries out the reaction Exonucleolytic cleavage in either 5'- to 3'- or 3'- to 5'-direction to yield nucleoside 5'-phosphates.. Its function is as follows. Bidirectionally degrades single-stranded DNA into large acid-insoluble oligonucleotides, which are then degraded further into small acid-soluble oligonucleotides. This chain is Exodeoxyribonuclease 7 large subunit, found in Xanthomonas campestris pv. campestris (strain B100).